The sequence spans 291 residues: Shikimate dehydrogenase (NADP(+)) (291 aa).

Shikimate is bound by residues 22–24 (SLS) and threonine 69. The active-site Proton acceptor is lysine 73. The shikimate site is built by asparagine 94 and aspartate 110. NADP(+) is bound by residues 131-135 (GSGGA) and leucine 226. Tyrosine 228 is a shikimate binding site. Glycine 249 contacts NADP(+).

The protein belongs to the shikimate dehydrogenase family. In terms of assembly, homodimer.

The enzyme catalyses shikimate + NADP(+) = 3-dehydroshikimate + NADPH + H(+). It functions in the pathway metabolic intermediate biosynthesis; chorismate biosynthesis; chorismate from D-erythrose 4-phosphate and phosphoenolpyruvate: step 4/7. In terms of biological role, involved in the biosynthesis of the chorismate, which leads to the biosynthesis of aromatic amino acids. Catalyzes the reversible NADPH linked reduction of 3-dehydroshikimate (DHSA) to yield shikimate (SA). The protein is Shikimate dehydrogenase (NADP(+)) of Synechococcus sp. (strain JA-3-3Ab) (Cyanobacteria bacterium Yellowstone A-Prime).